A 390-amino-acid chain; its full sequence is GTPase Obg (390 aa).

Positions 1–159 (MKFIDEALIR…RDLQLELMLL (159 aa)) constitute an Obg domain. One can recognise an OBG-type G domain in the interval 160 to 333 (ADVGMLGLPN…LCRDIMDFIE (174 aa)). GTP is bound by residues 166 to 173 (GLPNAGKS), 191 to 195 (FTTLV), 213 to 216 (DIPG), 283 to 286 (NKID), and 314 to 316 (SAV). Residues Ser173 and Thr193 each coordinate Mg(2+). The segment at 363 to 390 (DHQFEDEDEDWDDWSEEDEEGVETIYKP) is disordered. Residues 366–384 (FEDEDEDWDDWSEEDEEGV) show a composition bias toward acidic residues.

It belongs to the TRAFAC class OBG-HflX-like GTPase superfamily. OBG GTPase family. Monomer. Requires Mg(2+) as cofactor.

The protein resides in the cytoplasm. An essential GTPase which binds GTP, GDP and possibly (p)ppGpp with moderate affinity, with high nucleotide exchange rates and a fairly low GTP hydrolysis rate. Plays a role in control of the cell cycle, stress response, ribosome biogenesis and in those bacteria that undergo differentiation, in morphogenesis control. The polypeptide is GTPase Obg (Pasteurella multocida (strain Pm70)).